Reading from the N-terminus, the 430-residue chain is Long-chain specific acyl-CoA dehydrogenase, mitochondrial (430 aa).

A mitochondrion-targeting transit peptide spans M1–S30. Residue K42 is modified to N6-acetyllysine. S54 and S55 each carry phosphoserine. An N6-acetyllysine; alternate mark is found at K66 and K81. N6-succinyllysine; alternate occurs at positions 66 and 81. Residues K92 and K95 each carry the N6-acetyllysine modification. K165 is subject to N6-succinyllysine. I170–S179 contributes to the FAD binding site. Position 179 (S179) interacts with substrate. Phosphoserine is present on S191. An FAD-binding site is contributed by F203–T205. A227–H228 is a substrate binding site. K240 is subject to N6-succinyllysine. Residues K254 and K279 each carry the N6-acetyllysine; alternate modification. Residues K254 and K279 each carry the N6-succinyllysine; alternate modification. Substrate is bound by residues Y282 and P289–R292. The active-site Proton acceptor is the E291. R317 is a binding site for FAD. Position 318 is an N6-acetyllysine (K318). Position 322 is an N6-acetyllysine; alternate (K322). K322 carries the N6-succinyllysine; alternate modification. An FAD-binding site is contributed by Q328. An N6-acetyllysine modification is found at K358. S362 is subject to Phosphoserine. Q385–G389 is a binding site for FAD. G412–G413 contributes to the substrate binding site. Residue T414–E416 participates in FAD binding.

This sequence belongs to the acyl-CoA dehydrogenase family. Homotetramer. Requires FAD as cofactor. In terms of processing, acetylation at Lys-318 and Lys-322 in proximity of the cofactor-binding sites strongly reduces catalytic activity. These sites are deacetylated by SIRT3.

It localises to the mitochondrion matrix. It carries out the reaction a long-chain 2,3-saturated fatty acyl-CoA + oxidized [electron-transfer flavoprotein] + H(+) = a long-chain (2E)-enoyl-CoA + reduced [electron-transfer flavoprotein]. It catalyses the reaction octanoyl-CoA + oxidized [electron-transfer flavoprotein] + H(+) = (2E)-octenoyl-CoA + reduced [electron-transfer flavoprotein]. The catalysed reaction is decanoyl-CoA + oxidized [electron-transfer flavoprotein] + H(+) = (2E)-decenoyl-CoA + reduced [electron-transfer flavoprotein]. The enzyme catalyses dodecanoyl-CoA + oxidized [electron-transfer flavoprotein] + H(+) = (2E)-dodecenoyl-CoA + reduced [electron-transfer flavoprotein]. It carries out the reaction tetradecanoyl-CoA + oxidized [electron-transfer flavoprotein] + H(+) = (2E)-tetradecenoyl-CoA + reduced [electron-transfer flavoprotein]. It catalyses the reaction oxidized [electron-transfer flavoprotein] + hexadecanoyl-CoA + H(+) = (2E)-hexadecenoyl-CoA + reduced [electron-transfer flavoprotein]. The catalysed reaction is octadecanoyl-CoA + oxidized [electron-transfer flavoprotein] + H(+) = (2E)-octadecenoyl-CoA + reduced [electron-transfer flavoprotein]. The enzyme catalyses (5E)-tetradecenoyl-CoA + oxidized [electron-transfer flavoprotein] + H(+) = (2E,5E)-tetradecadienoyl-CoA + reduced [electron-transfer flavoprotein]. It carries out the reaction (5Z)-tetradecenoyl-CoA + oxidized [electron-transfer flavoprotein] + H(+) = (2E,5Z)-tetradecadienoyl-CoA + reduced [electron-transfer flavoprotein]. It catalyses the reaction oxidized [electron-transfer flavoprotein] + (9Z)-octadecenoyl-CoA + H(+) = (2E,9Z)-octadecadienoyl-CoA + reduced [electron-transfer flavoprotein]. The catalysed reaction is hexanoyl-CoA + oxidized [electron-transfer flavoprotein] + H(+) = (2E)-hexenoyl-CoA + reduced [electron-transfer flavoprotein]. The enzyme catalyses eicosanoyl-CoA + oxidized [electron-transfer flavoprotein] + H(+) = (2E)-eicosenoyl-CoA + reduced [electron-transfer flavoprotein]. It carries out the reaction docosanoyl-CoA + oxidized [electron-transfer flavoprotein] + H(+) = (2E)-docosenoyl-CoA + reduced [electron-transfer flavoprotein]. It catalyses the reaction tetracosanoyl-CoA + oxidized [electron-transfer flavoprotein] + H(+) = (2E)-tetracosenoyl-CoA + reduced [electron-transfer flavoprotein]. Its pathway is lipid metabolism; mitochondrial fatty acid beta-oxidation. With respect to regulation, inhibited by crotonyl-CoA, 2-octenoyl-CoA and 2-hexadecenoyl-CoA. Its function is as follows. Long-chain specific acyl-CoA dehydrogenase is one of the acyl-CoA dehydrogenases that catalyze the first step of mitochondrial fatty acid beta-oxidation, an aerobic process breaking down fatty acids into acetyl-CoA and allowing the production of energy from fats. The first step of fatty acid beta-oxidation consists in the removal of one hydrogen from C-2 and C-3 of the straight-chain fatty acyl-CoA thioester, resulting in the formation of trans-2-enoyl-CoA. Among the different mitochondrial acyl-CoA dehydrogenases, long-chain specific acyl-CoA dehydrogenase can act on saturated and unsaturated acyl-CoAs with 6 to 24 carbons with a preference for 8 to 18 carbons long primary chains. This is Long-chain specific acyl-CoA dehydrogenase, mitochondrial from Rattus norvegicus (Rat).